Reading from the N-terminus, the 491-residue chain is UDP-N-acetylmuramate--L-alanine ligase (491 aa).

126-132 (GTHGKTT) is a binding site for ATP.

The protein belongs to the MurCDEF family.

The protein localises to the cytoplasm. The catalysed reaction is UDP-N-acetyl-alpha-D-muramate + L-alanine + ATP = UDP-N-acetyl-alpha-D-muramoyl-L-alanine + ADP + phosphate + H(+). It participates in cell wall biogenesis; peptidoglycan biosynthesis. Functionally, cell wall formation. This is UDP-N-acetylmuramate--L-alanine ligase from Salmonella arizonae (strain ATCC BAA-731 / CDC346-86 / RSK2980).